Consider the following 309-residue polypeptide: E3 ubiquitin-protein ligase SINAT5 (309 aa).

An RING-type zinc finger spans residues 46 to 82; it reads CPVCTNSMYPPIHQCHNGHTLCSTCKSRVHNRCPTCR. Residues 96-289 are SBD; the sequence is VAESLELPCK…KELKLRVTGR (194 aa). The segment at 99-159 adopts an SIAH-type zinc-finger fold; it reads SLELPCKYYN…LVAHLRDDHK (61 aa). Zn(2+)-binding residues include cysteine 104, cysteine 111, histidine 123, cysteine 127, cysteine 134, cysteine 141, histidine 153, and histidine 158.

The protein belongs to the SINA (Seven in absentia) family. As to quaternary structure, homodimer; homodimerization is essential for its function. Interacts with UBC28 and NAC021/NAC022. Interacts with SINAT6. Interacts with ATG6 and TRAF1A. Interacts with WAV3. Interacts with FREE1. In terms of tissue distribution, expressed at low level in the vascular tissue of mature roots. Expressed in lateral roots and in elongation zone of the main root upon stimulation by auxin. Colocalizes with NAC021/NAC022.

It localises to the nucleus. Its subcellular location is the cytoplasm. It catalyses the reaction S-ubiquitinyl-[E2 ubiquitin-conjugating enzyme]-L-cysteine + [acceptor protein]-L-lysine = [E2 ubiquitin-conjugating enzyme]-L-cysteine + N(6)-ubiquitinyl-[acceptor protein]-L-lysine.. It participates in protein modification; protein ubiquitination. Functionally, E3 ubiquitin-protein ligase that mediates ubiquitination and subsequent proteasomal degradation of target proteins. E3 ubiquitin ligases accept ubiquitin from an E2 ubiquitin-conjugating enzyme in the form of a thioester and then directly transfers the ubiquitin to targeted substrates. Mediates the ubiquitination and proteasomal-dependent degradation of NAC021/NAC022, a transcription activator that functions downstream of the auxin signals, thereby acting as a down-regulator of auxin signals. Involved in the formation of lateral roots. Is antagonist to SINAT1, SINAT2, SINAT3 and SINAT4 by suppressing FREE1 ubiquitination and degradation mediated by SINAT1, SINAT2, SINAT3 and SINAT4, and promoting FREE1 accumulation. The protein is E3 ubiquitin-protein ligase SINAT5 of Arabidopsis thaliana (Mouse-ear cress).